Here is a 348-residue protein sequence, read N- to C-terminus: Calcium/calmodulin-dependent protein kinase type 1 (348 aa).

The short motif at Arg7–Tyr22 is the Nuclear localization signal 1 element. The Protein kinase domain maps to Tyr22 to Ile278. ATP contacts are provided by residues Leu28 to Val36 and Lys52. A Nuclear localization signal 2 motif is present at residues Lys71–His78. Asp144 serves as the catalytic Proton acceptor. Thr179 bears the Phosphothreonine; by ckk-1 mark. An autoinhibitory domain region spans residues Ile278–Leu318. The Nuclear export sequence motif lies at Ile288–Val294. The Nuclear localization signal 3 motif lies at Lys297–Lys307. The segment at Lys298–Gln319 is calmodulin-binding. Residues Ser327 to Gln338 show a composition bias toward polar residues. The interval Ser327–Ala348 is disordered. Residues Pro339 to Ala348 show a composition bias toward pro residues.

This sequence belongs to the protein kinase superfamily. CAMK Ser/Thr protein kinase family. CaMK subfamily. As to quaternary structure, interacts with importin ima-3; affinity for ima-3 is increased in the presence of Ca(2+) and calmodulin and leads to increased nuclear accumulation of cmk-1 in FLP neurons upon prolonged heat activation. Mg(2+) serves as cofactor. Phosphorylation at Thr-179 can promote both nuclear export and import, sustaining nucleocytoplasmic shuttling. Expressed in head and tail neurons and vulval muscles. Throughout the nervous system. Detected in neurites and neuronal cell bodies. Expressed in the mechanosensory neurons, AVM and ALM, and in the interneurons, AVA, AVB and AVD. Expressed in the right and left ASE neurons where it functions cell-autonomously to control salt-avoidance learning. Expressed in FLP and AFD thermosensory neurons.

It is found in the nucleus. The protein resides in the cytoplasm. It carries out the reaction L-seryl-[protein] + ATP = O-phospho-L-seryl-[protein] + ADP + H(+). The enzyme catalyses L-threonyl-[protein] + ATP = O-phospho-L-threonyl-[protein] + ADP + H(+). Its activity is regulated as follows. Activated by Ca(2+)/calmodulin. Binding of calmodulin results in a conformational change that generates functional binding sites for both substrate and ATP, and thus relieves autoinhibition and lowers the Km of substrate binding. Must be phosphorylated by ckk-1 to be maximally active but this does not appear to be required for activity in AFD neurons. Its function is as follows. Calcium/calmodulin-dependent protein kinase that operates in the calcium-triggered CaMKK-CaMK1 signaling cascade which results in transcriptional activation. Transcriptional activation occurs at least in part through phosphorylation of crh-1. Regulates gene expression, sensory morphology, and function of the AFD thermosensory neurons. Involved in long-term adaptation of AFD neurons to temperatures warmer than the initial acclimatized cultivation temperature. Acts in the FLP thermal nociceptors to moderate the responsiveness to noxious heat and controls neuropeptide release from FLP neurons in response to temperature elevations. Regulates the dauer decision, the decision of the larvae to enter into the alternative stress-resistant and long-lived dauer developmental stage, based on the feeding state, primarily in the AWC sensory neurons. Acts non cell-autonomously in the AWC neurons to regulate expression of the daf-28 insulin-like peptide and cell-autonomously in the ASI sensory neurons to regulate expression of the growth promoting daf-7 in a food-regulated manner. Plays a role in memory-based thermal response of an individual AFD neuron cell. Influences habituation and sensitivity to repeated mechanosensory stimuli. Involved in chemotaxis response in AWC neurons to attractant 2-heptanone, a volatile organic compound emitted by the nematode pathogenic bacterium B.nematocida B16. Acts in the ASE salt-sensing neurons to promote a type of aversive gustatory-associated learning called salt-avoidance learning via regulation of crh-1 signaling and the promotion of long-term memory formation, but is not involved in salt attraction. Represses transcription of glutamate receptor glr-1 in the nucleus basally and in response to changes in synaptic activity. The chain is Calcium/calmodulin-dependent protein kinase type 1 from Caenorhabditis elegans.